The sequence spans 378 residues: Tetraacyldisaccharide 4'-kinase (378 aa).

Residue 63–70 (AVGGAGKT) participates in ATP binding.

It belongs to the LpxK family.

It carries out the reaction a lipid A disaccharide + ATP = a lipid IVA + ADP + H(+). Its pathway is glycolipid biosynthesis; lipid IV(A) biosynthesis; lipid IV(A) from (3R)-3-hydroxytetradecanoyl-[acyl-carrier-protein] and UDP-N-acetyl-alpha-D-glucosamine: step 6/6. Transfers the gamma-phosphate of ATP to the 4'-position of a tetraacyldisaccharide 1-phosphate intermediate (termed DS-1-P) to form tetraacyldisaccharide 1,4'-bis-phosphate (lipid IVA). This chain is Tetraacyldisaccharide 4'-kinase, found in Anaeromyxobacter dehalogenans (strain 2CP-C).